Reading from the N-terminus, the 222-residue chain is Superoxide dismutase [Mn], mitochondrial (222 aa).

Residues 1-24 constitute a mitochondrion transit peptide; it reads MLSRAVCGTGRQLAPALGYLGSRQ. His50 serves as a coordination point for Mn(2+). Tyr58 is modified (3'-nitrotyrosine). N6-acetyllysine; alternate is present on residues Lys68 and Lys75. N6-succinyllysine; alternate occurs at positions 68 and 75. His98 lines the Mn(2+) pocket. An N6-acetyllysine modification is found at Lys114. Lys122 and Lys130 each carry N6-acetyllysine; alternate. N6-succinyllysine; alternate occurs at positions 122 and 130. Mn(2+) is bound by residues Asp183 and His187. An N6-acetyllysine modification is found at Lys202.

This sequence belongs to the iron/manganese superoxide dismutase family. Homotetramer. Requires Mn(2+) as cofactor. In terms of processing, nitrated under oxidative stress. Nitration coupled with oxidation inhibits the catalytic activity. Acetylation at Lys-122 decreases enzymatic activity. Deacetylated by SIRT3 upon exposure to ionizing radiations or after long fasting. Post-translationally, polyubiquitinated; leading to proteasomal degradation. Deubiquitinated by USP36 which increases protein stability.

Its subcellular location is the mitochondrion matrix. It catalyses the reaction 2 superoxide + 2 H(+) = H2O2 + O2. Its function is as follows. Destroys superoxide anion radicals which are normally produced within the cells and which are toxic to biological systems. This chain is Superoxide dismutase [Mn], mitochondrial (SOD2), found in Macaca nemestrina (Pig-tailed macaque).